The primary structure comprises 465 residues: Siroheme synthase (465 aa).

Residues 1–203 (MDFLPLFHSL…GRPAEAERLL (203 aa)) form a precorrin-2 dehydrogenase /sirohydrochlorin ferrochelatase region. NAD(+) is bound by residues 22 to 23 (EV) and 43 to 44 (PQ). Position 128 is a phosphoserine (Ser-128). Positions 217–465 (GEVYLVGAGP…AWFEGAREDA (249 aa)) are uroporphyrinogen-III C-methyltransferase. S-adenosyl-L-methionine is bound at residue Pro-226. The Proton acceptor role is filled by Asp-249. Catalysis depends on Lys-271, which acts as the Proton donor. S-adenosyl-L-methionine is bound by residues 302-304 (GGD), Ile-307, 332-333 (TA), Met-384, and Gly-413.

This sequence in the N-terminal section; belongs to the precorrin-2 dehydrogenase / sirohydrochlorin ferrochelatase family. It in the C-terminal section; belongs to the precorrin methyltransferase family.

It catalyses the reaction uroporphyrinogen III + 2 S-adenosyl-L-methionine = precorrin-2 + 2 S-adenosyl-L-homocysteine + H(+). The catalysed reaction is precorrin-2 + NAD(+) = sirohydrochlorin + NADH + 2 H(+). The enzyme catalyses siroheme + 2 H(+) = sirohydrochlorin + Fe(2+). It participates in cofactor biosynthesis; adenosylcobalamin biosynthesis; precorrin-2 from uroporphyrinogen III: step 1/1. Its pathway is cofactor biosynthesis; adenosylcobalamin biosynthesis; sirohydrochlorin from precorrin-2: step 1/1. It functions in the pathway porphyrin-containing compound metabolism; siroheme biosynthesis; precorrin-2 from uroporphyrinogen III: step 1/1. The protein operates within porphyrin-containing compound metabolism; siroheme biosynthesis; siroheme from sirohydrochlorin: step 1/1. It participates in porphyrin-containing compound metabolism; siroheme biosynthesis; sirohydrochlorin from precorrin-2: step 1/1. In terms of biological role, multifunctional enzyme that catalyzes the SAM-dependent methylations of uroporphyrinogen III at position C-2 and C-7 to form precorrin-2 via precorrin-1. Then it catalyzes the NAD-dependent ring dehydrogenation of precorrin-2 to yield sirohydrochlorin. Finally, it catalyzes the ferrochelation of sirohydrochlorin to yield siroheme. The sequence is that of Siroheme synthase from Pseudomonas aeruginosa (strain UCBPP-PA14).